The following is a 94-amino-acid chain: DNA-directed RNA polymerase subunit Rpo11 (94 aa).

It belongs to the archaeal Rpo11/eukaryotic RPB11/RPC19 RNA polymerase subunit family. In terms of assembly, part of the RNA polymerase complex.

The protein localises to the cytoplasm. The catalysed reaction is RNA(n) + a ribonucleoside 5'-triphosphate = RNA(n+1) + diphosphate. Its function is as follows. DNA-dependent RNA polymerase (RNAP) catalyzes the transcription of DNA into RNA using the four ribonucleoside triphosphates as substrates. This is DNA-directed RNA polymerase subunit Rpo11 from Thermococcus kodakarensis (strain ATCC BAA-918 / JCM 12380 / KOD1) (Pyrococcus kodakaraensis (strain KOD1)).